Here is an 832-residue protein sequence, read N- to C-terminus: MSDDNDKPRTRKPLGLKRSVDAGEVKQTFSHGRTNKVAVEVKRKRKLLKPGETPAPAPEPAPEPAPAPAPAPAAKKPAPKKPAPAAETPQERVARLQREAEEERLKLAEDARKRDDQKAKQNADDEKKRQEENKKAEEEAEKQAAAEAEAAAAAEAAPEEDADDGRKAPVARKFTPVARPEPKRPEKKKEEKKPARGGAKDKRRSGKLTVSKALNEDEGRRAMSLAKLKRAREKERRLKGGGSSAPREKQVRDVIVPEAITVGELAKRMGEKGADLVKELFNLDMMVTVNQTIDQDTAELLVEQFGHNIQKVSEADVDIQAEEDVDPEETLQPRPPVVTIMGHVDHGKTSLLDALRGTNVTKGEAGGITQHIGSYQVNTKSGGKVTFLDTPGHAAFSEMRQRGANVTDIVVLVVAADDGVMPQTIEAIKHTKAAGVPMIVAINKCDKPEADPDNIRNRLLEHEIIVEKLSGDVQDVEISATKKTGLDELLEKIELQAELLELKARPDRMAEATVIEAQLDKGRGPVATVLITRGTLKRGDTFVVGTESGRVRAVVNDQGKQIKEAGPSMPVEVLGLGGVPGAGDQLTVVENEQRAREVAEYRQEKATEKRTALAPTSFDTMFNNLQSNVIEWPVLVKADVQGSVEAIVTALHNISNDEIKVRVLHAGVGAITESDVTLAAASNAPIIGFNVRPNAKARELVKRDDVRMMYYDVIYHLTDEVAKEMAGELGPERIETVVGRADVKEVFKSGKKDKAAGLLVTDGVIRKGLFARLTRDDVIVSATTIASLRRFKDDVDEVRSGLECGVVLEDTNDIQPGDSLEVFEVEERERTL.

The segment at 1 to 249 (MSDDNDKPRT…GGGSSAPREK (249 aa)) is disordered. Residues 53-71 (TPAPAPEPAPEPAPAPAPA) show a composition bias toward pro residues. The span at 89-144 (PQERVARLQREAEEERLKLAEDARKRDDQKAKQNADDEKKRQEENKKAEEEAEKQA) shows a compositional bias: basic and acidic residues. Over residues 145 to 156 (AAEAEAAAAAEA) the composition is skewed to low complexity. Residues 180–200 (PEPKRPEKKKEEKKPARGGAK) are compositionally biased toward basic and acidic residues. A tr-type G domain is found at 333–503 (PRPPVVTIMG…ELQAELLELK (171 aa)). The segment at 342 to 349 (GHVDHGKT) is G1. Residue 342 to 349 (GHVDHGKT) participates in GTP binding. The tract at residues 367 to 371 (GITQH) is G2. Residues 389-392 (DTPG) are G3. Residues 389–393 (DTPGH) and 443–446 (NKCD) contribute to the GTP site. The interval 443–446 (NKCD) is G4. Positions 479–481 (SAT) are G5.

This sequence belongs to the TRAFAC class translation factor GTPase superfamily. Classic translation factor GTPase family. IF-2 subfamily.

Its subcellular location is the cytoplasm. In terms of biological role, one of the essential components for the initiation of protein synthesis. Protects formylmethionyl-tRNA from spontaneous hydrolysis and promotes its binding to the 30S ribosomal subunits. Also involved in the hydrolysis of GTP during the formation of the 70S ribosomal complex. The chain is Translation initiation factor IF-2 from Erythrobacter litoralis (strain HTCC2594).